The sequence spans 239 residues: MGTPYYKRVLLKLSGEALAGDQGYGIDPLTITTIAAEIKEVVASGAQLALVIGGGNIFRGLAASSKGMDRASADYMGMLATMINSLAMQDALEKIGVDTRVQSAIAMQEVAEPYIRRRAMRHLEKGRVVIFGAGTGNPYFTTDTAASLRAMEIGADVILKGTKVDGVYSADPKKDPTAQKYPRLTYLEVLKKGLQVMDATATSLCMDNNLPIIVFDITTYGNIKKVVCGEEIGTVVKGE.

Position 12–15 (12–15) interacts with ATP; the sequence is KLSG. The involved in allosteric activation by GTP stretch occupies residues 20 to 25; it reads GDQGYG. Position 54 (G54) interacts with UMP. ATP is bound by residues G55 and R59. UMP contacts are provided by residues D74 and 135–142; that span reads TGNPYFTT. The ATP site is built by T162, Y168, and D171.

It belongs to the UMP kinase family. Homohexamer.

It localises to the cytoplasm. The enzyme catalyses UMP + ATP = UDP + ADP. Its pathway is pyrimidine metabolism; CTP biosynthesis via de novo pathway; UDP from UMP (UMPK route): step 1/1. Allosterically activated by GTP. Inhibited by UTP. Functionally, catalyzes the reversible phosphorylation of UMP to UDP. The polypeptide is Uridylate kinase (Geobacter metallireducens (strain ATCC 53774 / DSM 7210 / GS-15)).